A 474-amino-acid polypeptide reads, in one-letter code: P2X purinoceptor 2 (474 aa).

The Cytoplasmic segment spans residues 1 to 42; sequence MAATHPKAPTAQRLRQGWSAFWDYETPKVIVVRNRPLGVVYR. The helical transmembrane segment at 43-60 threads the bilayer; it reads AVQLLILLYFVWYVFIVQ. At 61–333 the chain is on the extracellular side; sequence KSYQDSETGP…IVHGQAGKFS (273 aa). The ATP site is built by K77 and K79. Disulfide bonds link C121–C172, C132–C155, and C138–C166. The N-linked (GlcNAc...) asparagine glycan is linked to N129. An N-linked (GlcNAc...) asparagine glycan is attached at N190. T192 serves as a coordination point for ATP. A disulfide bridge connects residues C222 and C232. N247 is a glycosylation site (N-linked (GlcNAc...) asparagine). An intrachain disulfide couples C266 to C275. Residues S292, N296, and R298 each coordinate ATP. Residue N306 is glycosylated (N-linked (GlcNAc...) asparagine). Residue K315 participates in ATP binding. The segment at 316-329 is pore-forming motif; the sequence is AYGIRIDVIVHGQA. The chain crosses the membrane as a helical span at residues 334–354; sequence LIPTIINLATALTSIGVGSFL. At 355–474 the chain is on the cytoplasmic side; sequence CDWILLTFMN…PTDPKGLAQL (120 aa). Positions 445-474 are disordered; it reads PDRCVGQGLPSSESPLQDSTPTDPKGLAQL. The segment covering 453 to 466 has biased composition (polar residues); the sequence is LPSSESPLQDSTPT.

Belongs to the P2X receptor family. Homotrimer and heterotrimer; functional P2XRs are organized as homomeric and heteromeric trimers. Homotrimer. Forms heterodimer with P2RX1. Forms heterotrimer with P2RX6. Forms heterotrimer with P2RX3. In terms of tissue distribution, express in organ of Corti.

It localises to the cell membrane. It catalyses the reaction Ca(2+)(in) = Ca(2+)(out). The enzyme catalyses K(+)(in) = K(+)(out). The catalysed reaction is Na(+)(in) = Na(+)(out). Its activity is regulated as follows. Fast activation by external ATP. Exhibits slow desensitization during prolonged ATP activation. Not sensitive to the ATP agonist:alpha/beta-methylene-ATP. Functionally, ATP-gated nonselective transmembrane cation channel permeable to potassium, sodium and calcium. Activation by extracellular ATP induces a variety of cellular responses, such as excitatory postsynaptic responses in sensory neurons, neuromuscular junctions (NMJ) formation, hearing, perception of taste and peristalsis. In the inner ear, regulates sound transduction and auditory neurotransmission, outer hair cell electromotility, inner ear gap junctions, and K(+) recycling. Mediates synaptic transmission between neurons and from neurons to smooth muscle. This Cavia porcellus (Guinea pig) protein is P2X purinoceptor 2 (P2RX2).